A 118-amino-acid polypeptide reads, in one-letter code: uncharacterized protein (118 aa).

This is an uncharacterized protein from Methanocaldococcus jannaschii (strain ATCC 43067 / DSM 2661 / JAL-1 / JCM 10045 / NBRC 100440) (Methanococcus jannaschii).